Consider the following 362-residue polypeptide: 3-dehydroquinate synthase (362 aa).

NAD(+) is bound by residues 71–76, 105–109, 129–130, Lys-142, Lys-151, and 169–172; these read DGEQYK, GVVGD, TT, and CLKT. Residues Glu-184, His-247, and His-264 each coordinate Zn(2+).

It belongs to the sugar phosphate cyclases superfamily. Dehydroquinate synthase family. The cofactor is Co(2+). Zn(2+) is required as a cofactor. NAD(+) serves as cofactor.

It is found in the cytoplasm. The enzyme catalyses 7-phospho-2-dehydro-3-deoxy-D-arabino-heptonate = 3-dehydroquinate + phosphate. Its pathway is metabolic intermediate biosynthesis; chorismate biosynthesis; chorismate from D-erythrose 4-phosphate and phosphoenolpyruvate: step 2/7. In terms of biological role, catalyzes the conversion of 3-deoxy-D-arabino-heptulosonate 7-phosphate (DAHP) to dehydroquinate (DHQ). The protein is 3-dehydroquinate synthase of Escherichia coli (strain K12 / MC4100 / BW2952).